The primary structure comprises 386 residues: Phosphoglycerate kinase (386 aa).

Residues 21–23 (DLN), Arg-36, 59–62 (HLGR), Arg-113, and Arg-146 contribute to the substrate site. Residues Lys-197, Glu-314, and 340-343 (GGDT) each bind ATP.

The protein belongs to the phosphoglycerate kinase family. Monomer.

Its subcellular location is the cytoplasm. It carries out the reaction (2R)-3-phosphoglycerate + ATP = (2R)-3-phospho-glyceroyl phosphate + ADP. It functions in the pathway carbohydrate degradation; glycolysis; pyruvate from D-glyceraldehyde 3-phosphate: step 2/5. The protein is Phosphoglycerate kinase of Azotobacter vinelandii (strain DJ / ATCC BAA-1303).